The primary structure comprises 263 residues: Malonyl-[acyl-carrier protein] O-methyltransferase (263 aa).

It belongs to the methyltransferase superfamily.

The catalysed reaction is malonyl-[ACP] + S-adenosyl-L-methionine = malonyl-[ACP] methyl ester + S-adenosyl-L-homocysteine. The protein operates within cofactor biosynthesis; biotin biosynthesis. Its function is as follows. Converts the free carboxyl group of a malonyl-thioester to its methyl ester by transfer of a methyl group from S-adenosyl-L-methionine (SAM). It allows to synthesize pimeloyl-ACP via the fatty acid synthetic pathway. This is Malonyl-[acyl-carrier protein] O-methyltransferase from Chlorobium luteolum (strain DSM 273 / BCRC 81028 / 2530) (Pelodictyon luteolum).